A 623-amino-acid polypeptide reads, in one-letter code: MNPIKEVKLEFAKILSERLSIDQNKIYENFEYPPKEQMGDVSLPLPTVTKNKELLNISDFPSGGKLIREIKKAGIYINGVINESELFKLIFTNFPEDYGIEKIQKPQRVVVEHTSANPIHPLHVGHLRNAILGDVIARMLKARGHEVNTRFYVNDAGRQVAILTLGYLLLGEPNPPRDEKIDQWIGVIYAITNILIEINQLKKELSSSNEEEYRQKISKLDELISLAGKHREKYPEIFDKLADEISKIENIEEKIQNIIKNYERHSDEKIVNVIRKLVNWTLEGFKDSLKILDIHFDNFDYESDLLWSKRVDEIVKLALSSKNIKEHKGTIALSLDLDPEARKRLNIPLGLELPPLVLVRSDGTTLYTTRDIAYSLYKFEVFYANKVINVIAEQQSVPQMQLRASLYLLGFKDIAENLIHYSYGMVNLQGMRMSGRLGRYISLDEIINEVKEVAENKIKEKGGDLNNLLDIVNSAIRYAILSVSANKPVSFNIKNIVDFDQNSGPYLQYTYARAYNILAKNEEKLDINKVDFSDIVDDKRRLLISIAKFPEVATKAVDELRPEDLLGFMRSIADIFNRWYNFERVLQEPNEGKRMLRLFIVKGVERILYNGLSIVGIKPLKRM.

Residues 116-126 carry the 'HIGH' region motif; the sequence is ANPIHPLHVGH.

Belongs to the class-I aminoacyl-tRNA synthetase family.

Its subcellular location is the cytoplasm. The catalysed reaction is tRNA(Arg) + L-arginine + ATP = L-arginyl-tRNA(Arg) + AMP + diphosphate. The protein is Arginine--tRNA ligase of Sulfurisphaera tokodaii (strain DSM 16993 / JCM 10545 / NBRC 100140 / 7) (Sulfolobus tokodaii).